Consider the following 925-residue polypeptide: Serine/threonine-protein kinase SIK2 (925 aa).

The Protein kinase domain maps to 20 to 271 (YDIEGTLGKG…IAQIKEHKWM (252 aa)). T25 is subject to Phosphothreonine. ATP is bound by residues 26 to 34 (LGKGNFAVV) and K49. K53 is subject to N6-acetyllysine; by EP300. The Proton acceptor role is filled by D142. A Phosphothreonine modification is found at T175. Positions 295 to 335 (EFNEQVLRLMHSLGIDQQKTIESLQNKSYNHFAAIYFLLVE) constitute a UBA domain. Position 534 is a phosphoserine (S534). A disordered region spans residues 564 to 586 (ALSSQKREVHNRSPVSFREGRRA). S587 is modified (phosphoserine). Disordered stretches follow at residues 630–674 (PNLA…PRQS), 742–776 (SSYPQPSQQLPLPRQETPPPSQQAPPFSLTQPLSP), and 800–895 (QPLP…SSYD). Composition is skewed to low complexity over residues 648–659 (QEEVSQQQESVS) and 742–756 (SSYPQPSQQLPLPRQ). Residues 765 to 774 (APPFSLTQPL) show a composition bias toward polar residues. Residues 808-820 (PRAAPLPTQLQQQ) show a composition bias toward low complexity. The span at 821 to 833 (QPPPPPPPPPPRQ) shows a compositional bias: pro residues.

Belongs to the protein kinase superfamily. CAMK Ser/Thr protein kinase family. SNF1 subfamily. Interacts with and phosphorylates TORC2/CRTC2. Requires Mg(2+) as cofactor. In terms of processing, phosphorylated at Thr-175 by STK11/LKB1 in complex with STE20-related adapter-alpha (STRADA) pseudo kinase and CAB39. Phosphorylated at Thr-484 in response to insulin in adipocytes. Acetylation at Lys-53 inhibits kinase activity. Deacetylated by HDAC6.

The protein localises to the cytoplasm. The protein resides in the endoplasmic reticulum membrane. The enzyme catalyses L-seryl-[protein] + ATP = O-phospho-L-seryl-[protein] + ADP + H(+). It catalyses the reaction L-threonyl-[protein] + ATP = O-phospho-L-threonyl-[protein] + ADP + H(+). With respect to regulation, activated by phosphorylation on Thr-175. Serine/threonine-protein kinase that plays a role in many biological processes such as fatty acid oxidation, autophagy, immune response or glucose metabolism. Phosphorylates 'Ser-794' of IRS1 in insulin-stimulated adipocytes, potentially modulating the efficiency of insulin signal transduction. Inhibits CREB activity by phosphorylating and repressing TORCs, the CREB-specific coactivators. Phosphorylates EP300 and thus inhibits its histone acetyltransferase activity. In turn, regulates the DNA-binding ability of several transcription factors such as PPARA or MLXIPL. Also plays a role in thymic T-cell development. This Pongo abelii (Sumatran orangutan) protein is Serine/threonine-protein kinase SIK2 (SIK2).